The chain runs to 977 residues: ELMO domain-containing protein A (977 aa).

The ELMO domain occupies 383-561; the sequence is EHDALLMKLW…SVKNLIITAL (179 aa). Low complexity-rich tracts occupy residues 792 to 838 and 852 to 897; these read SSNN…NNSG and QQQQ…SSSS. Residues 792 to 899 are disordered; it reads SSNNNIKDNL…SSSSSSSSNP (108 aa).

In terms of assembly, associates with mhcA.

Its function is as follows. Functions as a negative regulator of actin polymerization. Modulates actin/myosin II at cortex actinomyosins to prevent excessive F-actin polymerization around the cell periphery, thereby maintaining proper cell shape during phagocytosis and chemotaxis. This Dictyostelium discoideum (Social amoeba) protein is ELMO domain-containing protein A (elmoA).